The sequence spans 882 residues: MAYRKRGARRETNLKQDERMQEKEDSKNINNDSPKSQLSEKVLSKKEEIITDNQEEVKISDEVKKSNKEESKQLLEVLKTKEEHQKEVQYEILQKTIPTFEPKESILKKLEDIKPEQAKKQTKLFRIFEPKQLPIYRANGERELRNRWYWKLKRDTLPDGDYDVREYFLNLYDQVLMEMPDYLLLKDMAVENKNSRDAGKVVDSETAAICDAIFQDEETEGAVRRFIAEMRQRVQADRNVVNYPSILHPIDHAFNEYFLQHQLVEPLNNDIIFNYIPERIRNDVNYILNMDRNLPSTARYIRPNLLQDRLNLHDNFESLWDTITTSNYILARSVVPDLKELVSTEAQIQKMSQDLQLEALTIQSETQFLTGINSQAANDCFKTLIAAMLSQRTMSLDFVTTNYMSLISGMWLLTVIPNDMFIRESLVACQLAIINTIVYPAFGMQRMHYRNGDPQTPFQIAEQQIQNFQVANWLHFVNYNQFRQVVIDGVLNQVLNDNIRNGHVVNQLMEALMQLSRQQFPTMPVDYKRSIQRGILLLSNRLGQLVDLTRLLSYNYETLMACITMNMQHVQTLTTEKLQLTSVTSLCMLIGNATVIPSPQTLFHYYNVNVNFHSNYNERINDAVAIITAANRLNLYQKKMKSIVEDFLKRLQIFDVARVPDDQMYRLRDRLRLLPVEIRRLDIFNLIAMNMEQIERASDKIAQGVIIAYRDMQLERDEMYGYVNIARNLDGFQQINLEELMRSGDYAQITNMLLNNQPVALVGALPFITDSSVISLIAKLDATVFAQIVKLRKVDTLKPILYKINSDSNDFYLVANYDWIPTSTTKVYKQVPQQFDFRASMHMLTSNLTFTVYSDLLAFVSADTVEPINAVAFDNMRIMNEL.

The interval 1–47 (MAYRKRGARRETNLKQDERMQEKEDSKNINNDSPKSQLSEKVLSKKE) is disordered. The interval 1–82 (MAYRKRGARR…QLLEVLKTKE (82 aa)) is 5-fold hub; involved in the encapsidation of VP1 and VP3. A compositionally biased stretch (basic and acidic residues) spans 9 to 27 (RRETNLKQDERMQEKEDSK). Residues 28–39 (NINNDSPKSQLS) are compositionally biased toward polar residues. Hydrophobic regions lie at residues 396–416 (LDFV…LTVI) and 424–444 (ESLV…AFGM).

Belongs to the rotavirus VP2 family. In terms of assembly, homodecamer; each decamer is made up of two conformers of VP2, called VP2A and VP2B. Interacts with a VP1-VP3 complex. Interacts with the intermediate capsid protein VP6. Interacts with NSP5. Interacts (via N-terminus) with NSP2. In terms of processing, sumoylated with SUMO1 and SUMO2. Sumoylation of viral proteins seems to have a positive role on viral replication.

Its subcellular location is the virion. In terms of biological role, inner capsid protein that self-assembles to form an icosahedral capsid with a T=2 symmetry, which consists of 120 copies of VP2, with channels at each of its five-fold vertices. This capsid constitutes the innermost concentric layer of the viral mature particle. It encapsidates the polymerase VP1, the capping enzyme VP3 and the genomic dsRNA, thereby defining the core. The innermost VP2 capsid and the intermediate VP6 capsid remain intact following cell entry to protect the dsRNA from degradation and to prevent unfavorable antiviral responses in the host cell during all the replication cycle of the virus. Nascent transcripts are transcribed within the structural confines of this double-layered particle (DLP) and are extruded through the channels formed by VP2 N-termini. VP2 is required for the replicase activity of VP1 polymerase. Probably recruits a copy of a VP1-VP3 complex, potentially along with a segment of plus-strand RNA, as a decamer of VP2 assembles. May activate the autoinhibited VP1/RNA complex to coordinate packaging and genome replication. The protein is Inner capsid protein VP2 of Chlorocebus pygerythrus (Vervet monkey).